Here is a 333-residue protein sequence, read N- to C-terminus: DNA-directed RNA polymerase subunit alpha (333 aa).

The alpha N-terminal domain (alpha-NTD) stretch occupies residues 1-246 (MEKFIKINWT…AHLNIIGDVN (246 aa)). The alpha C-terminal domain (alpha-CTD) stretch occupies residues 263–333 (HSKTQNILIQ…YNVFLDKGEE (71 aa)).

Belongs to the RNA polymerase alpha chain family. As to quaternary structure, homodimer. The RNAP catalytic core consists of 2 alpha, 1 beta, 1 beta' and 1 omega subunit. When a sigma factor is associated with the core the holoenzyme is formed, which can initiate transcription.

It carries out the reaction RNA(n) + a ribonucleoside 5'-triphosphate = RNA(n+1) + diphosphate. Its function is as follows. DNA-dependent RNA polymerase catalyzes the transcription of DNA into RNA using the four ribonucleoside triphosphates as substrates. The polypeptide is DNA-directed RNA polymerase subunit alpha (Mycoplasma mobile (strain ATCC 43663 / 163K / NCTC 11711) (Mesomycoplasma mobile)).